We begin with the raw amino-acid sequence, 28 residues long: leu operon leader peptide (28 aa).

Its function is as follows. Involved in control of the biosynthesis of leucine. The protein is leu operon leader peptide (leuL) of Shigella flexneri.